A 399-amino-acid chain; its full sequence is uncharacterized protein (399 aa).

This is an uncharacterized protein from Aquifex aeolicus (strain VF5).